The primary structure comprises 251 residues: Aliphatic sulfonates import ATP-binding protein SsuB (251 aa).

The ABC transporter domain maps to 3 to 231 (VSINEVSKYF…PRNKTSQSFQ (229 aa)). 39–46 (GPSGCGKS) lines the ATP pocket.

The protein belongs to the ABC transporter superfamily. Aliphatic sulfonates importer (TC 3.A.1.17.2) family. The complex is composed of two ATP-binding proteins (SsuB), two transmembrane proteins (SsuC) and a solute-binding protein (SsuA).

The protein resides in the cell membrane. It catalyses the reaction ATP + H2O + aliphatic sulfonate-[sulfonate-binding protein]Side 1 = ADP + phosphate + aliphatic sulfonateSide 2 + [sulfonate-binding protein]Side 1.. In terms of biological role, part of the ABC transporter complex SsuABC involved in aliphatic sulfonates import. Responsible for energy coupling to the transport system. This Bacillus thuringiensis subsp. konkukian (strain 97-27) protein is Aliphatic sulfonates import ATP-binding protein SsuB.